A 274-amino-acid chain; its full sequence is Putative ABC transporter ATP-binding protein MM_1037 (274 aa).

Residues 2 to 235 (IRLENVSYCY…PSLKDLGLTP (234 aa)) enclose the ABC transporter domain. ATP is bound at residue 35–42 (GRNGSGKS).

The protein belongs to the ABC transporter superfamily.

The protein localises to the cell membrane. Probably part of an ABC transporter complex. Responsible for energy coupling to the transport system. This is Putative ABC transporter ATP-binding protein MM_1037 from Methanosarcina mazei (strain ATCC BAA-159 / DSM 3647 / Goe1 / Go1 / JCM 11833 / OCM 88) (Methanosarcina frisia).